Consider the following 69-residue polypeptide: Large ribosomal subunit protein uL29 (69 aa).

This sequence belongs to the universal ribosomal protein uL29 family.

The sequence is that of Large ribosomal subunit protein uL29 from Rhodospirillum centenum (strain ATCC 51521 / SW).